The chain runs to 1091 residues: LRR receptor-like serine/threonine-protein kinase RGI3 (1091 aa).

An N-terminal signal peptide occupies residues 1-24 (MPPNIYRLSFFSSLLCFFFIPCFS). Topologically, residues 25–703 (LDQQGQALLS…TTRNSSVVRL (679 aa)) are extracellular. An LRR 1 repeat occupies 33-56 (LSWKSQLNISGDAFSSWHVADTSP). A glycan (N-linked (GlcNAc...) asparagine) is linked at asparagine 40. A disulfide bridge links cysteine 57 with cysteine 64. LRR repeat units follow at residues 67-91 (RGEV…SLRS), 92-115 (LKSL…EIGD), 116-140 (FTEL…IFRL), 142-166 (KLKT…NLSG), 168-188 (VELM…IGEL), 190-213 (NLQV…IGNC), 214-237 (ENLV…IGNL), 239-261 (RVQT…IGYC), 262-285 (TELQ…IGGL), 287-309 (KLQS…LGNC), 311-332 (ELWL…SFGK), 333-357 (LENL…LTNC), 359-383 (KLTH…NLRS), 385-405 (TMFF…LSQC), 406-429 (RELQ…IFGL), 431-453 (NLTK…IGNC), 454-477 (TNLY…IGNL), 478-501 (KNLN…ISGC), 503-524 (SLEF…TTLP), 525-548 (KSLK…IGLL), 549-572 (TELT…ISTC), 574-596 (SLQL…LGQI), 598-620 (SLAI…RFSD), 621-644 (LKNL…LTDL), 645-668 (QNLV…PFFR), and 669-690 (RLPL…ISTR). An N-linked (GlcNAc...) asparagine glycan is attached at asparagine 104. Asparagine 163 carries N-linked (GlcNAc...) asparagine glycosylation. Short sequence motifs (small peptide recognition) lie at residues 173–174 (FD), 195–198 (RAGG), 218–223 (MLGLAE), tyrosine 246, and 268–270 (YLY). 2 short sequence motifs (small peptide recognition) span residues 316-319 (DFSE) and 338-340 (ELQ). Asparagine 356 is a glycosylation site (N-linked (GlcNAc...) asparagine). Short sequence motifs (small peptide recognition) lie at residues 386-390 (MFFAW) and 412-415 (DLSY). N-linked (GlcNAc...) asparagine glycosylation occurs at asparagine 431. Residues 434-438 (KLLLL) carry the Small peptide recognition motif. Asparagine 452 is a glycosylation site (N-linked (GlcNAc...) asparagine). The Small peptide recognition motif lies at 458 to 460 (RLR). Asparagine 604 carries N-linked (GlcNAc...) asparagine glycosylation. Residue asparagine 651 is glycosylated (N-linked (GlcNAc...) asparagine). N-linked (GlcNAc...) asparagine glycosylation is present at asparagine 697. Residues 704–724 (TILILVVVTAVLVLMAVYTLV) traverse the membrane as a helical segment. At 725–1091 (RARAAGKQLL…CSFAFSDDSV (367 aa)) the chain is on the cytoplasmic side. Residues 760–1046 (LTSANVIGTG…MLTEIRHIDV (287 aa)) form the Protein kinase domain. ATP is bound by residues 766 to 774 (IGTGSSGVV) and lysine 788. Tyrosine 831 and tyrosine 870 each carry phosphotyrosine. The active-site Proton acceptor is the aspartate 883. A Phosphotyrosine modification is found at tyrosine 933.

Belongs to the protein kinase superfamily. Ser/Thr protein kinase family. Binds to RGF peptides such as RGF1, GLV5/CLEL1/RGF2, GLV7/CLEL3/RGF3, GLV3/RGF4, GLV10/CLEL7/RGF5 and RGF10/CLELN; these interactions trigger the formation of heterodimers with SERK1, SERK2 or BAK1/SERK3 via LRR regions. Phosphorylated and ubiquitinated upon interaction with RGF1, thus leading to activation a subsequent degradation. Post-translationally, autophosphorylated. As to expression, expressed in roots.

It is found in the cell membrane. It catalyses the reaction L-seryl-[protein] + ATP = O-phospho-L-seryl-[protein] + ADP + H(+). The enzyme catalyses L-threonyl-[protein] + ATP = O-phospho-L-threonyl-[protein] + ADP + H(+). Its function is as follows. Together with RGI1, RGI2, RGI4 and RGI5, acts as a receptor of RGF peptides (e.g. RGF1, GLV5/CLEL1/RGF2, GLV7/CLEL3/RGF3, GLV3/RGF4, GLV10/CLEL7/RGF5 and RGF10/CLELN), peptide hormones which maintain the postembryonic root stem cell niche by regulating the expression levels and patterns of the transcription factor PLETHORA (PLT, e.g. PLT1 and PLT2). Links RGF peptides signal with their downstream components. The polypeptide is LRR receptor-like serine/threonine-protein kinase RGI3 (Arabidopsis thaliana (Mouse-ear cress)).